Reading from the N-terminus, the 1157-residue chain is MSLFGVGFLAFAKGKRVCAIGRSSLGKISDPLEVPNLLDLQLDSFDWLIGGPRWRAALDAYRKNPSGAPIAEKSGLDEVFDEISPIEDSAGNMQLNFSKPVLEAEELSVRECRVRGRTYSAPLYVEAEFMNHDTGEIKTQTVFMGDFPLMTDKGTFVINGTERVVVSQLVRSPGVYFERTPEKNSEKDLFSGRIIPARGAWLEFEVDRHDQLGVRVDRKRRQPVIFFLRAIGMTDDEIRDAFGEFESISVQHEKNIGLSRDDALREIYRRVRPGEQASAEAGRALLENFYFTSRRFDLARVGRYKVNRKLGVDVDPTRMVLTRSDIIATIRYLAALHLGFSEVAVLNSNKSVPISTDDIDHLGNRRIRPVGELVQNQLRAGLARMERVVRERMTTQDIEAIIPQTLINVMPIVAALKEFYGTSQLSQFMDQNNPLAGLTHKRRLSALGPGGLSRERAGVEVRDVNPSHYGRMCPIETPEGPNIGLIGSLACYSRVNSFGFIETPYRRVVNGKVTDDIEYMTATQEDEHAIAQASTPLRPDNSFVDERVLVRRKGGEVEVVPADQVDYMDVSGRQMVSVATSLIPFLEHNDANRALMGSNMQRQAVPLLVTESPLVGTGMERYVAIDAGDVLIAEDPGIVGDVSADVVTVKQDDGKHRDYHVGKFVRSNQGNCYNQRVVVRSGDRVEKGTVLADGPCTDKGELSLGRNLLVAFMPWEGYNFEDAIIISQNLVKDDTLSSIHIEEHEVSTRDTKLGSEEITRDLPNVSMDYIKDLDERGIIRIGAEVGPGDILVGKVTPKGETELSAEERLLRAIFNEKSMEVRDTSLKVPHGQQGTVIDVKLFDAVDGEDKLGAGINQRVVVYIAHKRKITEGDKLAGRHGNKGVISKILPVEDMPFMADGTPVDIILNPLGVPARMNFGQVLETHLGWISKQGWKIEGDPDWAKDIRVREAQPDSRVSSPVFDGISEGEITGLFSSVFPNRDGERAVGSDGKAILYDGRTGEPFPEPISVGYMYVLKLHHLVDDKIHARSTGPYSMIIQQPLGGKAQFGGQRFGEMEVWALEAYGAAHALQELLTIKSDDVVGRVKVYDAIVKGYPIPTPGVPESFKVIVKEMQSLCINIEVVSDGEDDVSADAETLQIEEGLDTSPKVEVGSLEEV.

This sequence belongs to the RNA polymerase beta chain family. The RNAP catalytic core consists of 2 alpha, 1 beta, 1 beta' and 1 omega subunit. When a sigma factor is associated with the core the holoenzyme is formed, which can initiate transcription.

It catalyses the reaction RNA(n) + a ribonucleoside 5'-triphosphate = RNA(n+1) + diphosphate. Functionally, DNA-dependent RNA polymerase catalyzes the transcription of DNA into RNA using the four ribonucleoside triphosphates as substrates. In Tropheryma whipplei (Whipple's bacillus), this protein is DNA-directed RNA polymerase subunit beta.